Reading from the N-terminus, the 373-residue chain is Enoyl-[acyl-carrier-protein] reductase, mitochondrial (373 aa).

The N-terminal 53 residues, 1-53 (MLVSQRVTGARARAPQLAGLLEAWYRHGRTTSSYSALSEPSRVRALVYGNHGD), are a transit peptide targeting the mitochondrion. Residue lysine 61 is modified to N6-acetyllysine; alternate. Lysine 61 carries the post-translational modification N6-succinyllysine; alternate. The active-site Proton donor is the tyrosine 94. Residues asparagine 167, 193–196 (NSGV), and 216–218 (RDR) each bind NADP(+). Lysine 252 and lysine 267 each carry N6-acetyllysine; alternate. N6-succinyllysine; alternate is present on residues lysine 252 and lysine 267. NADP(+) contacts are provided by residues 285-288 (YGGM) and 310-312 (FWL). Lysine 316 is subject to N6-succinyllysine. Residue lysine 368 coordinates NADP(+).

It belongs to the zinc-containing alcohol dehydrogenase family. Quinone oxidoreductase subfamily. As to quaternary structure, homodimer. Expressed in Purkinje cells (at protein level).

It localises to the mitochondrion. The enzyme catalyses a 2,3-saturated acyl-[ACP] + NADP(+) = a (2E)-enoyl-[ACP] + NADPH + H(+). It catalyses the reaction (2E)-butenoyl-[ACP] + NADPH + H(+) = butanoyl-[ACP] + NADP(+). The catalysed reaction is (2E)-hexenoyl-[ACP] + NADPH + H(+) = hexanoyl-[ACP] + NADP(+). It carries out the reaction (2E)-octenoyl-[ACP] + NADPH + H(+) = octanoyl-[ACP] + NADP(+). The enzyme catalyses (2E)-decenoyl-[ACP] + NADPH + H(+) = decanoyl-[ACP] + NADP(+). It catalyses the reaction (2E)-dodecenoyl-[ACP] + NADPH + H(+) = dodecanoyl-[ACP] + NADP(+). The catalysed reaction is (2E)-tetradecenoyl-[ACP] + NADPH + H(+) = tetradecanoyl-[ACP] + NADP(+). It carries out the reaction (2E)-hexadecenoyl-[ACP] + NADPH + H(+) = hexadecanoyl-[ACP] + NADP(+). In terms of biological role, catalyzes the NADPH-dependent reduction of trans-2-enoyl thioesters in mitochondrial fatty acid synthesis (fatty acid synthesis type II). Fatty acid chain elongation in mitochondria uses acyl carrier protein (ACP) as an acyl group carrier, but the enzyme accepts both ACP and CoA thioesters as substrates in vitro. Displays a preference for medium-chain over short- and long-chain substrates. May provide the octanoyl chain used for lipoic acid biosynthesis, regulating protein lipoylation and mitochondrial respiratory activity particularly in Purkinje cells. Involved in iron homeostasis; affecting Fe-S cluster assembly and ceramide metabolism. Required for proper morphology and bioenergetic functions of mitochondria. Required for maintenance of neurons. The protein is Enoyl-[acyl-carrier-protein] reductase, mitochondrial (Mecr) of Mus musculus (Mouse).